A 119-amino-acid polypeptide reads, in one-letter code: Type II secretion system protein I (119 aa).

The propeptide at 1–5 (MNARG) is leader sequence. M6 carries the N-methylmethionine modification. A helical membrane pass occupies residues 6 to 26 (MTLLEVMVALAVFAIAGLAVM).

This sequence belongs to the GSP I family. In terms of assembly, type II secretion is composed of four main components: the outer membrane complex, the inner membrane complex, the cytoplasmic secretion ATPase and the periplasm-spanning pseudopilus. Interacts with core component ExeG. Post-translationally, cleaved by prepilin peptidase. Methylated by prepilin peptidase at the amino group of the N-terminal methionine once the leader sequence is cleaved by prepilin peptidase.

It localises to the cell inner membrane. Component of the type II secretion system required for the energy-dependent secretion of extracellular factors such as proteases and toxins from the periplasm. Part of the pseudopilus tip complex that is critical for the recognition and binding of secretion substrates. The protein is Type II secretion system protein I (exeI) of Aeromonas hydrophila.